Reading from the N-terminus, the 359-residue chain is MEKIFQNVEIKPFLIDFSNPFIKNAAKRLFQLEEQLPLVPVNVVMDFKGINRAAVHGLSRVLQDEIPNYMLDIKPGGYKIEDSTDLFMTEQFIRNRINFIPIYAKNETLVFALRSLNNSCEVKTIYSRDLIQVAGPKLKYPIFNPTFEIGFLQPGKSLIIEDIYIKRGIGRKHAAFNLAVKTHFSHLDIEQYPTDKKEYMALSGYKQSSMTSDPRHHRLGLCFPAVPLPHINQAVRTYLKNACRVIIGRIQSIQKIYENFEEPQPELVLFSMDEEKTKAIITIKDETHTIGNLLKTYIYEMIPDISFVGYQCVPHKQEMVLTIIHKASQEDLITLLEKSIQNIIQTFQILEKNVDELIA.

This sequence in the N-terminal section; belongs to the archaeal RpoD/eukaryotic RPB3 RNA polymerase subunit family. The protein in the C-terminal section; belongs to the archaeal RpoL/eukaryotic RPB11/RPC19 RNA polymerase subunit family. Part of the viral DNA-directed RNA polymerase that consists of 8 polII-like subunits (RPB1, RPB2, RPB3, RPB5, RPB6, RPB7, RPB9, RPB10), a capping enzyme and a termination factor.

It is found in the host cytoplasm. It localises to the virion. Its function is as follows. Component of the DNA-directed RNA polymerase (RNAP) that catalyzes the transcription in the cytoplasm of viral DNA into RNA using the four ribonucleoside triphosphates as substrates. This chain is DNA-directed RNA polymerase RPB3-11 homolog, found in Ornithodoros (relapsing fever ticks).